We begin with the raw amino-acid sequence, 352 residues long: Nicotinate-nucleotide--dimethylbenzimidazole phosphoribosyltransferase (352 aa).

Residue glutamate 318 is the Proton acceptor of the active site.

Belongs to the CobT family.

The enzyme catalyses 5,6-dimethylbenzimidazole + nicotinate beta-D-ribonucleotide = alpha-ribazole 5'-phosphate + nicotinate + H(+). It participates in nucleoside biosynthesis; alpha-ribazole biosynthesis; alpha-ribazole from 5,6-dimethylbenzimidazole: step 1/2. Functionally, catalyzes the synthesis of alpha-ribazole-5'-phosphate from nicotinate mononucleotide (NAMN) and 5,6-dimethylbenzimidazole (DMB). In Geotalea uraniireducens (strain Rf4) (Geobacter uraniireducens), this protein is Nicotinate-nucleotide--dimethylbenzimidazole phosphoribosyltransferase.